Consider the following 91-residue polypeptide: Cell division topological specificity factor (91 aa).

It belongs to the MinE family.

Functionally, prevents the cell division inhibition by proteins MinC and MinD at internal division sites while permitting inhibition at polar sites. This ensures cell division at the proper site by restricting the formation of a division septum at the midpoint of the long axis of the cell. This Gloeobacter violaceus (strain ATCC 29082 / PCC 7421) protein is Cell division topological specificity factor.